Here is a 500-residue protein sequence, read N- to C-terminus: 4-aminobutyrate aminotransferase, mitochondrial (500 aa).

The transit peptide at 1-28 (MAFLLITRRLACSSQKNLHLFIPGSRYI) directs the protein to the mitochondrion. Position 163 (C163) interacts with [2Fe-2S] cluster. 164–165 (GS) contributes to the pyridoxal 5'-phosphate binding site. Residue C166 participates in [2Fe-2S] cluster binding. Residue R220 participates in substrate binding. At K231 the chain carries N6-succinyllysine. An N6-acetyllysine; alternate modification is found at K252. Position 252 is an N6-succinyllysine; alternate (K252). N6-acetyllysine is present on residues K279 and K318. The residue at position 357 (K357) is an N6-(pyridoxal phosphate)lysine. Position 381 (T381) interacts with pyridoxal 5'-phosphate. An N6-acetyllysine; alternate modification is found at K413. K413 carries the N6-succinyllysine; alternate modification. Residues K452 and K470 each carry the N6-acetyllysine modification.

This sequence belongs to the class-III pyridoxal-phosphate-dependent aminotransferase family. Homodimer; disulfide-linked. Requires pyridoxal 5'-phosphate as cofactor. [2Fe-2S] cluster serves as cofactor.

Its subcellular location is the mitochondrion matrix. The enzyme catalyses 4-aminobutanoate + 2-oxoglutarate = succinate semialdehyde + L-glutamate. It catalyses the reaction (S)-3-amino-2-methylpropanoate + 2-oxoglutarate = 2-methyl-3-oxopropanoate + L-glutamate. Its function is as follows. Catalyzes the conversion of gamma-aminobutyrate and L-beta-aminoisobutyrate to succinate semialdehyde and methylmalonate semialdehyde, respectively. Can also convert delta-aminovalerate and beta-alanine. The chain is 4-aminobutyrate aminotransferase, mitochondrial from Mus musculus (Mouse).